The primary structure comprises 137 residues: Putative pre-16S rRNA nuclease (137 aa).

This sequence belongs to the YqgF nuclease family.

The protein resides in the cytoplasm. In terms of biological role, could be a nuclease involved in processing of the 5'-end of pre-16S rRNA. The chain is Putative pre-16S rRNA nuclease from Clostridium kluyveri (strain NBRC 12016).